Here is a 99-residue protein sequence, read N- to C-terminus: MMMNAFFPAMALIVLVGCSTPPPVQKAQRVKGDPLRSLNMEALCKDQAGKRYNTGEQKIDVTAFEQFQGSYEMRGYTFRKEQFVCSFDADGHFLHLSMR.

An N-terminal signal peptide occupies residues 1-17; the sequence is MMMNAFFPAMALIVLVG. Residue cysteine 18 is the site of N-palmitoyl cysteine attachment. Cysteine 18 carries S-diacylglycerol cysteine lipidation.

It localises to the cell membrane. This is an uncharacterized protein from Escherichia coli O6:H1 (strain CFT073 / ATCC 700928 / UPEC).